Consider the following 394-residue polypeptide: Phosphorylated adapter RNA export protein (394 aa).

The segment covering 1 to 18 (MALEVGDMEDGQLSDSDS) has biased composition (acidic residues). Positions 1–33 (MALEVGDMEDGQLSDSDSDMTVAPSDRPLQLPK) are disordered. Ala2 is modified (N-acetylalanine). Residues 2-329 (ALEVGDMEDG…KAARKRRTQV (328 aa)) form a necessary for interaction with CBP80 region. 6 positions are modified to phosphoserine: Ser14, Ser16, Ser65, Ser66, Ser69, and Ser73. A Nuclear localization signal motif is present at residues 81–84 (KRKR). The tract at residues 83-111 (KRQKCFNPPPKPEPFQFGQSSQKPPVAGG) is disordered. The Nuclear export signal signature appears at 130–139 (VATELGILGM). Residues 183–193 (KKMGSKEEENG) show a composition bias toward basic and acidic residues. The interval 183–211 (KKMGSKEEENGQGHLKRKRPVKDRLGNRP) is disordered. Residues 198–201 (KRKR) carry the Nuclear localization signal motif. Ser226 bears the Phosphoserine mark. The segment at 228 to 328 (EKVADEISFR…KKAARKRRTQ (101 aa)) is sufficient for poly U RNA-binding. Residues 279–287 (GSRRRTPGG) form a necessary for poly U RNA-binding and snRNA export region. Thr296 is subject to Phosphothreonine. A phosphoserine mark is found at Ser356 and Ser368.

It belongs to the PHAX family. In terms of assembly, found in a U snRNA export complex with PHAX/RNUXA, NCBP1/CBP80, NCBP2/CBP20, RAN, XPO1 and m7G-capped RNA. Part of a precomplex with PHAX/RNUXA, NCBP1/CBP80, NCBP2/CBP20 and m7G-capped RNA. Interacts with NCBP1/CBP80. Found in a complex with snoRNA. Interacts with NCBP2/CBP20. Interacts with DDX39A; this interaction stimulates PHAX RNA binding activity. In terms of processing, phosphorylated in the nucleus. Dephosphorylated in the cytoplasm.

Its subcellular location is the nucleus. The protein localises to the nucleoplasm. It is found in the cajal body. The protein resides in the cytoplasm. Its function is as follows. A phosphoprotein adapter involved in the XPO1-mediated U snRNA export from the nucleus. Bridge components required for U snRNA export, the cap binding complex (CBC)-bound snRNA on the one hand and the GTPase Ran in its active GTP-bound form together with the export receptor XPO1 on the other. Its phosphorylation in the nucleus is required for U snRNA export complex assembly and export, while its dephosphorylation in the cytoplasm causes export complex disassembly. It is recycled back to the nucleus via the importin alpha/beta heterodimeric import receptor. The directionality of nuclear export is thought to be conferred by an asymmetric distribution of the GTP- and GDP-bound forms of Ran between the cytoplasm and nucleus. Its compartmentalized phosphorylation cycle may also contribute to the directionality of export. Binds strongly to m7G-capped U1 and U5 small nuclear RNAs (snRNAs) in a sequence-unspecific manner and phosphorylation-independent manner. Also plays a role in the biogenesis of U3 small nucleolar RNA (snoRNA). Involved in the U3 snoRNA transport from nucleoplasm to Cajal bodies. Binds strongly to m7G-capped U3, U8 and U13 precursor snoRNAs and weakly to trimethylated (TMG)-capped U3, U8 and U13 snoRNAs. Also binds to telomerase RNA. The chain is Phosphorylated adapter RNA export protein (PHAX) from Homo sapiens (Human).